Reading from the N-terminus, the 225-residue chain is Putative membrane protease YugP (225 aa).

Histidine 95 contributes to the Zn(2+) binding site. The active site involves glutamate 96. Residues histidine 99 and histidine 103 each coordinate Zn(2+). The next 3 membrane-spanning stretches (helical) occupy residues 116 to 138, 140 to 162, and 192 to 212; these read IFPVVNFASGVAPLLFLGGMLLG, LNLIGLGIILFSAAVFFQLITLP, and VLSAAALTYVAAALVSLFELL.

The protein resides in the cell membrane. In Bacillus subtilis (strain 168), this protein is Putative membrane protease YugP (yugP).